The following is a 356-amino-acid chain: Glucose 1-dehydrogenase 2 (356 aa).

Aspartate 38 serves as a coordination point for Zn(2+). Serine 40 is a binding site for substrate. 2 residues coordinate Zn(2+): histidine 64 and glutamate 65. 2 residues coordinate substrate: glutamate 114 and glutamate 150. Zn(2+) is bound at residue glutamate 150. NADP(+) contacts are provided by residues 181-184, 206-207, and 301-303; these read NGNL, RR, and VVN. Position 303 (asparagine 303) interacts with substrate.

It belongs to the zinc-containing alcohol dehydrogenase family. Glucose 1-dehydrogenase subfamily. Requires Zn(2+) as cofactor.

It carries out the reaction D-glucose + NAD(+) = D-glucono-1,5-lactone + NADH + H(+). The enzyme catalyses D-glucose + NADP(+) = D-glucono-1,5-lactone + NADPH + H(+). Functionally, catalyzes the NAD(P)(+)-dependent oxidation of D-glucose to D-gluconate via gluconolactone. Can utilize both NAD(+) and NADP(+) as electron acceptor. Is involved in the degradation of glucose through a modified Entner-Doudoroff pathway. This Haloterrigena turkmenica (strain ATCC 51198 / DSM 5511 / JCM 9101 / NCIMB 13204 / VKM B-1734 / 4k) (Halococcus turkmenicus) protein is Glucose 1-dehydrogenase 2.